The chain runs to 146 residues: Hemoglobin subunit beta (146 aa).

Val-1 carries the post-translational modification N-acetylvaline. One can recognise a Globin domain in the interval 2–146 (HLTPEEKVAV…VANALAHKYH (145 aa)). Thr-12 carries the post-translational modification Phosphothreonine. Phosphoserine is present on Ser-44. At Lys-59 the chain carries N6-acetyllysine. Position 63 (His-63) interacts with heme b. Lys-82 bears the N6-acetyllysine mark. His-92 is a heme b binding site. S-nitrosocysteine is present on Cys-93. N6-acetyllysine is present on Lys-144.

It belongs to the globin family. Heterotetramer of two alpha chains and two beta chains. As to expression, red blood cells.

Its function is as follows. Involved in oxygen transport from the lung to the various peripheral tissues. The sequence is that of Hemoglobin subunit beta (HBB) from Cercocebus atys (Sooty mangabey).